The following is a 355-amino-acid chain: MAITKYKAAAVTSEPGWFDLEGGVRKTIDFINEAGQAGCKFVAFPEVWIPGYPYWMWKVTYLQSLPMLKRYRENSMAVDSEEMRRIRRAARDNQIFVSLGFSEIDHATLYLSQVLIGPDGAVINHRRKIKPTHVEKLVYGDGAGDTFMSVSETEIGRVGQLNCWENMNPFLKSLNVSAGEQVHVAAWPVYPGKERQVYPDPATNYADPASDLVTPEYAIETGTWTLAPFQRLSVEGLKINTPEGVEPETDPSVYNGHARIYRPDGSLVVKPEKDFDGLLFVDIDLNECHLTKVLADFAGHYMRPDLIRLLVDTRRKELITEADPNGSIATYSTRQRLGLDKPLEKKEGEDTPDVL.

A CN hydrolase domain is found at 6-285 (YKAAAVTSEP…DGLLFVDIDL (280 aa)). Glutamate 46 functions as the Proton acceptor in the catalytic mechanism. Residue lysine 128 is part of the active site. Cysteine 163 serves as the catalytic Nucleophile.

The protein belongs to the carbon-nitrogen hydrolase superfamily. Nitrilase family. As to quaternary structure, oligomer of dimers, forming left-handed helical fibers.

The enzyme catalyses formamide = hydrogen cyanide + H2O. Catalyzes the hydration of cyanide to formamide. Degradation of cyanide may be important for plant pathogenic fungi in infection of cyanogenic plants. This chain is Cyanide hydratase, found in Gibberella zeae (strain ATCC MYA-4620 / CBS 123657 / FGSC 9075 / NRRL 31084 / PH-1) (Wheat head blight fungus).